An 814-amino-acid polypeptide reads, in one-letter code: MDAAFLLVLGLLAQSLCLSLGVPGWRRPTTLYPWRRAPALSRVRRAWVIPPISVSENHKRLPYPLVQIKSDKQQLGSVIYSIQGPGVDEEPRGVFSIDKFTGKVFLNAMLDREKTDRFRLRAFALDLGGSTLEDPTDLEIVVVDQNDNRPAFLQEAFTGRVLEGAVPGTYVTRAEATDADDPETDNAALRFSILQQGSPELFSIDELTGEIRTVQVGLDREVVAVYNLTLQVADMSGDGLTATASAIITLDDINDNAPEFTRDEFFMEAIEAVSGVDVGRLEVEDRDLPGSPNWVARFTILEGDPDGQFTIRTDPKTNEGVLSIVKALDYESCEHYELKVSVQNEAPLQAAALRAERGQAKVRVHVQDTNEPPVFQENPLRTSLAEGAPPGTLVATFSARDPDTEQLQRLSYSKDYDPEDWLQVDAATGRIQTQHVLSPASPFLKGGWYRAIVLAQDDASQPRTATGTLSIEILEVNDHAPVLAPPPPGSLCSEPHQGPGLLLGATDEDLPPHGAPFHFQLSPRLPELGRNWSLSQVNVSHARLRPRHQVPEGLHRLSLLLRDSGQPPQQREQPLNVTVCRCGKDGVCLPGAAALLAGGTGLSLGALVIVLASALLLLVLVLLVALRARFWKQSRGKGLLHGPQDDLRDNVLNYDEQGGGEEDQDAYDISQLRHPTALSLPLGPPPLRRDAPQGRLHPQPPRVLPTSPLDIADFINDGLEAADSDPSVPPYDTALIYDYEGDGSVAGTLSSILSSQGDEDQDYDYLRDWGPRFARLADMYGHPCGLEYGARWDHQAREGLSPGALLPRHRGRTA.

The first 21 residues, 1–21 (MDAAFLLVLGLLAQSLCLSLG), serve as a signal peptide directing secretion. Positions 22-60 (VPGWRRPTTLYPWRRAPALSRVRRAWVIPPISVSENHKR) are excised as a propeptide. 5 Cadherin domains span residues 61-152 (LPYP…RPAF), 153-260 (LQEA…APEF), 261-375 (TRDE…PPVF), 376-481 (QENP…DHAP), and 482-590 (VLAP…VCLP). The Extracellular portion of the chain corresponds to 61–606 (LPYPLVQIKS…AGGTGLSLGA (546 aa)). N-linked (GlcNAc...) asparagine glycosylation occurs at asparagine 227. N-linked (GlcNAc...) asparagine glycosylation is found at asparagine 531, asparagine 538, and asparagine 576. The helical transmembrane segment at 607–626 (LVIVLASALLLLVLVLLVAL) threads the bilayer. At 627–814 (RARFWKQSRG…LLPRHRGRTA (188 aa)) the chain is on the cytoplasmic side. Disordered regions lie at residues 636-663 (GKGLLHGPQDDLRDNVLNYDEQGGGEED) and 676-703 (TALSLPLGPPPLRRDAPQGRLHPQPPRV).

In terms of tissue distribution, expressed in the brain and cerebellum.

The protein resides in the cell membrane. Functionally, cadherins are calcium-dependent cell adhesion proteins. They preferentially interact with themselves in a homophilic manner in connecting cells; cadherins may thus contribute to the sorting of heterogeneous cell types. M-cadherin is part of the myogenic program and may provide a trigger for terminal muscle differentiation. The polypeptide is Cadherin-15 (CDH15) (Homo sapiens (Human)).